Reading from the N-terminus, the 199-residue chain is Achaete-scute homolog 1 (199 aa).

The disordered stretch occupies residues 37–56 (PAEEQQASKAKPIKRQRSAS). In terms of domain architecture, bHLH spans 81–133 (AAVARRNERERNRVKLVNLGFATLREHVPNGAANKKMSKVETLRSAVEYIRAL). The segment covering 162–179 (HDMNSMAGSPVSSYSSDE) has biased composition (polar residues). The interval 162–189 (HDMNSMAGSPVSSYSSDEGSYDPLSPEE) is disordered.

As to quaternary structure, efficient DNA binding requires dimerization with another bHLH protein. In terms of tissue distribution, neuronal precursor cells.

The protein resides in the nucleus. In terms of biological role, transcription factor that plays a key role in neuronal differentiation: acts as a pioneer transcription factor, accessing closed chromatin to allow other factors to bind and activate neural pathways. Directly binds the E box motif (5'-CANNTG-3') on promoters and promotes transcription of neuronal genes. The combination of three transcription factors, ASCL1, POU3F2/BRN2 and MYT1L, is sufficient to reprogram fibroblasts and other somatic cells into induced neuronal (iN) cells in vitro. The sequence is that of Achaete-scute homolog 1 (ascl1) from Xenopus laevis (African clawed frog).